The sequence spans 451 residues: Chaperone SurA (451 aa).

Positions 1–26 (MKKIIPTNLFKLISILFILTPFFAWS) are cleaved as a signal peptide. 2 consecutive PpiC domains span residues 179–280 (DVEY…QLQG) and 290–388 (KQYH…FLDG).

The protein resides in the periplasm. It carries out the reaction [protein]-peptidylproline (omega=180) = [protein]-peptidylproline (omega=0). Functionally, chaperone involved in the correct folding and assembly of outer membrane proteins. Recognizes specific patterns of aromatic residues and the orientation of their side chains, which are found more frequently in integral outer membrane proteins. May act in both early periplasmic and late outer membrane-associated steps of protein maturation. This chain is Chaperone SurA, found in Hydrogenovibrio crunogenus (strain DSM 25203 / XCL-2) (Thiomicrospira crunogena).